Here is a 215-residue protein sequence, read N- to C-terminus: Cytochrome b6 (215 aa).

A helical transmembrane segment spans residues 32–52; that stretch reads VFYCFGGMTLTCFLVQLATGF. Residue C35 coordinates heme c. 2 residues coordinate heme b: H86 and H100. 3 helical membrane passes run 90-110, 116-136, and 186-206; these read ASMMVLMMILHIFRVYLTGGF, LTWITGVILAVLTVSFGVTGY, and LHTLFLPALSVIFLLAHFLMI. Heme b-binding residues include H187 and H202.

It belongs to the cytochrome b family. PetB subfamily. The 4 large subunits of the cytochrome b6-f complex are cytochrome b6, subunit IV (17 kDa polypeptide, PetD), cytochrome f and the Rieske protein, while the 4 small subunits are PetG, PetL, PetM and PetN. The complex functions as a dimer. Heme b serves as cofactor. It depends on heme c as a cofactor.

The protein resides in the plastid. It is found in the chloroplast thylakoid membrane. In terms of biological role, component of the cytochrome b6-f complex, which mediates electron transfer between photosystem II (PSII) and photosystem I (PSI), cyclic electron flow around PSI, and state transitions. In Cyanidium caldarium (Red alga), this protein is Cytochrome b6.